A 327-amino-acid chain; its full sequence is Endo-1,4-beta-xylanase C (327 aa).

Residues 1–15 (MKFSSLLFTASLVAA) form the signal peptide. The region spanning 43–325 (TITDPNLLQS…KPAYTAVVNA (283 aa)) is the GH10 domain. The active-site Proton donor is the Glu-154. The Nucleophile role is filled by Glu-262. Cys-280 and Cys-286 are oxidised to a cystine.

It belongs to the glycosyl hydrolase 10 (cellulase F) family.

The protein localises to the secreted. It catalyses the reaction Endohydrolysis of (1-&gt;4)-beta-D-xylosidic linkages in xylans.. It functions in the pathway glycan degradation; xylan degradation. Its activity is regulated as follows. Weakly inhibited by the wheat xylanase inhibiting protein I (XIP-I). Functionally, endo-1,4-beta-xylanase involved in the hydrolysis of xylan, a major structural heterogeneous polysaccharide found in plant biomass representing the second most abundant polysaccharide in the biosphere, after cellulose. Plays an important role in causing fusarium head blight (FHB) on cereal crops. The polypeptide is Endo-1,4-beta-xylanase C (XYLC) (Gibberella zeae (strain ATCC MYA-4620 / CBS 123657 / FGSC 9075 / NRRL 31084 / PH-1) (Wheat head blight fungus)).